Consider the following 309-residue polypeptide: Ribosomal protein L11 methyltransferase (309 aa).

The S-adenosyl-L-methionine site is built by Thr152, Gly178, Asp200, and Asn242.

This sequence belongs to the methyltransferase superfamily. PrmA family.

The protein localises to the cytoplasm. The catalysed reaction is L-lysyl-[protein] + 3 S-adenosyl-L-methionine = N(6),N(6),N(6)-trimethyl-L-lysyl-[protein] + 3 S-adenosyl-L-homocysteine + 3 H(+). Its function is as follows. Methylates ribosomal protein L11. This chain is Ribosomal protein L11 methyltransferase, found in Pelobacter propionicus (strain DSM 2379 / NBRC 103807 / OttBd1).